Consider the following 238-residue polypeptide: Ribonuclease PH (238 aa).

Residues Arg-86 and 124–126 (GTR) each bind phosphate.

The protein belongs to the RNase PH family. In terms of assembly, homohexameric ring arranged as a trimer of dimers.

It catalyses the reaction tRNA(n+1) + phosphate = tRNA(n) + a ribonucleoside 5'-diphosphate. Functionally, phosphorolytic 3'-5' exoribonuclease that plays an important role in tRNA 3'-end maturation. Removes nucleotide residues following the 3'-CCA terminus of tRNAs; can also add nucleotides to the ends of RNA molecules by using nucleoside diphosphates as substrates, but this may not be physiologically important. Probably plays a role in initiation of 16S rRNA degradation (leading to ribosome degradation) during starvation. The protein is Ribonuclease PH of Rhizorhabdus wittichii (strain DSM 6014 / CCUG 31198 / JCM 15750 / NBRC 105917 / EY 4224 / RW1) (Sphingomonas wittichii).